The sequence spans 1907 residues: Chromatin modification-related protein EAF1 B (1907 aa).

Disordered stretches follow at residues 108–208 (ASPH…TDLV), 261–287 (NRVSSNSLNTKVDGEPVVRESTAGSKT), 323–373 (GGSP…SHAN), and 449–469 (NQSHRSTAEMQTKEKSSETEK). Residues 140–151 (SENKSVEGERNL) are compositionally biased toward basic and acidic residues. 3 stretches are compositionally biased toward polar residues: residues 261–270 (NRVSSNSLNT), 333–342 (GQKNSSTQLN), and 355–372 (TNRGATGTNGLESESSHA). The HSA domain maps to 563-641 (CGTAPVEVRE…LSYAILQFWS (79 aa)). Disordered stretches follow at residues 836-909 (SSSL…AVQK) and 928-952 (AETSGKPKKKKKTHQGSAYDQTWHL). Residues 856-866 (RRVRTASRHRV) are compositionally biased toward basic residues. Composition is skewed to polar residues over residues 884-898 (TDASSGDTSSFQDEY) and 942-952 (QGSAYDQTWHL). An SANT domain is found at 1049–1105 (SGNPWSLFEDQALVVLVHDMGPNWELISDAMNSTLKIKYIYRNPTECKDRHKILMDK). 8 disordered regions span residues 1107-1131 (AGDGADSAEDSGNSQSYPSTLPGIP), 1235-1266 (PVLPTSGAHPSTPGSSGVVLSNNLPTTSGLQS), 1296-1319 (LSGRNLQQPSLSTPAAVSGSDRGH), 1429-1465 (GHLSQQHQMSPQSHVLGNSHHPHLQSPSQATGAQQEA), 1477-1594 (YLQQ…QQLN), 1638-1703 (VRPD…SPAT), 1767-1791 (VPQSVTNTTQTASMGTTKGMPQASN), and 1824-1907 (VNNS…TKVE). 5 stretches are compositionally biased toward polar residues: residues 1116–1125 (DSGNSQSYPS), 1242–1266 (AHPSTPGSSGVVLSNNLPTTSGLQS), 1296–1310 (LSGRNLQQPSLSTPA), 1431–1444 (LSQQHQMSPQSHVL), and 1453–1462 (QSPSQATGAQ). Over residues 1493–1512 (PHVQQPQGSSVSSSSQNSPQ) the composition is skewed to low complexity. Residues 1513–1529 (TQPPVSPQPLSMPPVSP) are compositionally biased toward pro residues. Polar residues-rich tracts occupy residues 1532-1545 (NINAMAQQKPQKSQ), 1554-1568 (SPQSGTSGVNNQAGK), 1585-1594 (RQPTQGQQLN), 1640-1655 (PDQQSSVGTTTSTDLQ), 1662-1672 (PLSSNHSQQLP), 1681-1703 (PSPQQQMQLHSDNSIQGQSSPAT), 1769-1782 (QSVTNTTQTASMGT), and 1824-1844 (VNNSNTDSAGNDPVSTPNQGL). 2 stretches are compositionally biased toward basic and acidic residues: residues 1863–1872 (SEEKRPKLPE) and 1882–1892 (LASEEQPHLEE).

Belongs to the EAF1 family. In terms of assembly, component of the NuA4 histone acetyltransferase complex. Interacts with ARP4 and SWC4, and (via HSA domain) with TAF14 and TAF14B. Expressed in leaves.

Its subcellular location is the nucleus. Functionally, component of the NuA4 histone acetyltransferase complex which is involved in transcriptional activation of selected genes principally by acetylation of nucleosomal histone H4 and H2A. This Arabidopsis thaliana (Mouse-ear cress) protein is Chromatin modification-related protein EAF1 B (EAF1B).